A 184-amino-acid polypeptide reads, in one-letter code: Protein Syd (184 aa).

It belongs to the Syd family.

Its subcellular location is the cell inner membrane. Interacts with the SecY protein in vivo. May bind preferentially to an uncomplexed state of SecY, thus functioning either as a chelating agent for excess SecY in the cell or as a regulatory factor that negatively controls the translocase function. In Photobacterium profundum (strain SS9), this protein is Protein Syd.